A 308-amino-acid polypeptide reads, in one-letter code: Elongation factor Ts (308 aa).

Residues 80 to 83 (TDFV) are involved in Mg(2+) ion dislocation from EF-Tu.

It belongs to the EF-Ts family.

It localises to the cytoplasm. In terms of biological role, associates with the EF-Tu.GDP complex and induces the exchange of GDP to GTP. It remains bound to the aminoacyl-tRNA.EF-Tu.GTP complex up to the GTP hydrolysis stage on the ribosome. The sequence is that of Elongation factor Ts from Rhodopseudomonas palustris (strain BisB18).